A 669-amino-acid chain; its full sequence is DNA ligase (669 aa).

NAD(+) contacts are provided by residues 34–38, 83–84, and Glu114; these read DAEYD and SL. The N6-AMP-lysine intermediate role is filled by Lys116. Arg137, Glu171, Lys287, and Lys311 together coordinate NAD(+). Zn(2+) is bound by residues Cys405, Cys408, Cys423, and Cys428. The BRCT domain occupies 591–669; it reads NVESYFAGKT…EERFLQELNK (79 aa).

This sequence belongs to the NAD-dependent DNA ligase family. LigA subfamily. Mg(2+) is required as a cofactor. Mn(2+) serves as cofactor.

It carries out the reaction NAD(+) + (deoxyribonucleotide)n-3'-hydroxyl + 5'-phospho-(deoxyribonucleotide)m = (deoxyribonucleotide)n+m + AMP + beta-nicotinamide D-nucleotide.. Its function is as follows. DNA ligase that catalyzes the formation of phosphodiester linkages between 5'-phosphoryl and 3'-hydroxyl groups in double-stranded DNA using NAD as a coenzyme and as the energy source for the reaction. It is essential for DNA replication and repair of damaged DNA. In Bacillus cereus (strain AH187), this protein is DNA ligase.